Here is a 643-residue protein sequence, read N- to C-terminus: Probable extracellular metalloproteinase 4 (643 aa).

The first 18 residues, methionine 1–alanine 18, serve as a signal peptide directing secretion. The propeptide occupies histidine 19–alanine 254. Over residues threonine 47 to glycine 57 the composition is skewed to basic and acidic residues. The segment at threonine 47–asparagine 69 is disordered. Residues glutamate 58 to asparagine 69 show a composition bias toward polar residues. N-linked (GlcNAc...) asparagine glycosylation is found at asparagine 271 and asparagine 420. Histidine 437 serves as a coordination point for Zn(2+). Glutamate 438 is a catalytic residue. Histidine 441 is a binding site for Zn(2+). 2 N-linked (GlcNAc...) asparagine glycosylation sites follow: asparagine 603 and asparagine 629.

This sequence belongs to the peptidase M36 family. It depends on Zn(2+) as a cofactor.

It localises to the secreted. In terms of biological role, secreted metalloproteinase probably acting as a virulence factor. The polypeptide is Probable extracellular metalloproteinase 4 (MEP4) (Arthroderma benhamiae (strain ATCC MYA-4681 / CBS 112371) (Trichophyton mentagrophytes)).